Here is a 252-residue protein sequence, read N- to C-terminus: 2-succinyl-6-hydroxy-2,4-cyclohexadiene-1-carboxylate synthase (252 aa).

This sequence belongs to the AB hydrolase superfamily. MenH family. Monomer.

It carries out the reaction 5-enolpyruvoyl-6-hydroxy-2-succinyl-cyclohex-3-ene-1-carboxylate = (1R,6R)-6-hydroxy-2-succinyl-cyclohexa-2,4-diene-1-carboxylate + pyruvate. It functions in the pathway quinol/quinone metabolism; 1,4-dihydroxy-2-naphthoate biosynthesis; 1,4-dihydroxy-2-naphthoate from chorismate: step 3/7. It participates in quinol/quinone metabolism; menaquinone biosynthesis. Catalyzes a proton abstraction reaction that results in 2,5-elimination of pyruvate from 2-succinyl-5-enolpyruvyl-6-hydroxy-3-cyclohexene-1-carboxylate (SEPHCHC) and the formation of 2-succinyl-6-hydroxy-2,4-cyclohexadiene-1-carboxylate (SHCHC). The chain is 2-succinyl-6-hydroxy-2,4-cyclohexadiene-1-carboxylate synthase from Salmonella typhi.